Consider the following 1305-residue polypeptide: Myosin-IIIb (1305 aa).

The Protein kinase domain occupies 15–281 (WEIIETIGKG…VTHLLDHPFI (267 aa)). ATP-binding positions include 21-29 (IGKGTYGKV) and Lys-44. Asp-144 functions as the Proton acceptor in the catalytic mechanism. The Myosin motor domain maps to 331-1046 (CLEDDLVNLE…HVEQLNLLLR (716 aa)). Residues 927–949 (LMDLLSKMVVGQPHFIRCIKPND) form an actin-binding region. IQ domains are found at residues 1048–1077 (VMGRVVMLQAYTKGWLGARRYKRAKEKREK) and 1075–1104 (REKGAITIQSAWRGYDARRKLKQRSRRRSE). Disordered regions lie at residues 1093 to 1164 (RKLK…VTSG) and 1200 to 1233 (SPCEDSLKPGSEEGLSQKQRAPRRRCQQPKMLSS).

The protein in the C-terminal section; belongs to the TRAFAC class myosin-kinesin ATPase superfamily. Myosin family. It in the N-terminal section; belongs to the protein kinase superfamily. STE Ser/Thr protein kinase family. As to quaternary structure, interacts (via C-terminus) with ESPN. Interacts (via C-terminus) with ESPNL. As to expression, expressed in the cochlear hair cells (at protein level). Expressed in utricle hair bundles (at protein level).

The protein resides in the cytoplasm. It is found in the cytoskeleton. The protein localises to the cell projection. Its subcellular location is the stereocilium. The enzyme catalyses L-seryl-[protein] + ATP = O-phospho-L-seryl-[protein] + ADP + H(+). The catalysed reaction is L-threonyl-[protein] + ATP = O-phospho-L-threonyl-[protein] + ADP + H(+). Functionally, probable actin-based motor with a protein kinase activity. Required for normal cochlear hair bundle development and hearing. Plays an important role in the early steps of cochlear hair bundle morphogenesis. Influences the number and lengths of stereocilia to be produced and limits the growth of microvilli within the forming auditory hair bundles thereby contributing to the architecture of the hair bundle, including its staircase pattern. Involved in the elongation of actin in stereocilia tips by transporting the actin regulatory factor ESPN to the plus ends of actin filaments. The sequence is that of Myosin-IIIb (Myo3b) from Mus musculus (Mouse).